Consider the following 429-residue polypeptide: Chordin-like protein 2 (429 aa).

The N-terminal stretch at M1–A25 is a signal peptide. 2 consecutive VWFC domains span residues M31 to V96 and K109 to K175. N-linked (GlcNAc...) asparagine glycosylation is present at N114. S182 is subject to Phosphoserine; by FAM20C. Positions S182–S224 are disordered. Positions K250–P315 constitute a VWFC 3 domain.

In terms of assembly, interacts with GDF5. May interact with BMP2, BMP4, BMP5, BMP6, BMP7 and INHBA. In terms of processing, phosphorylated by FAM20C in the extracellular medium. Highly expressed in uterus. Moderately expressed in heart, liver, prostate, testis and ovary. Weakly expressed in skeletal muscle, kidney, spleen, small intestine and colon. Expressed in the secretory epithelial cells of uterine endometrium, fallopian tubes, endocervical glands, bladder and prostate, as well as the transitional epithelium of the urinary bladder, and in bone osteoblasts (at protein level). In normal cartilage, expression was confined in a few chondrocytes in the superficial zone as well as in the middle zone. In diseased cartilage coming from osteoarthritic patients, expression was limited to the middle zone of chondrocytes. Isoform 1 and isoform 2 are expressed in fetal cerebellum and heart, while only isoform 2 is detected in fetal spleen. Isoform 2 present in plasma.

It localises to the secreted. The protein resides in the cytoplasm. In terms of biological role, may inhibit BMPs activity by blocking their interaction with their receptors. Has a negative regulator effect on the cartilage formation/regeneration from immature mesenchymal cells, by preventing or reducing the rate of matrix accumulation. Implicated in tumor angiogenesis. May play a role during myoblast and osteoblast differentiation, and maturation. The sequence is that of Chordin-like protein 2 (CHRDL2) from Homo sapiens (Human).